Reading from the N-terminus, the 350-residue chain is Nuclear pore complex-interacting protein family member A1 (350 aa).

A disordered region spans residues 306–325 (KTPPECLLTPLPPSAPPSVD).

It belongs to the NPIP family. In terms of assembly, may associate with the nuclear pore complex. In terms of tissue distribution, widely expressed.

The protein localises to the nucleus. Its subcellular location is the nuclear pore complex. It is found in the nucleus membrane. The chain is Nuclear pore complex-interacting protein family member A1 (NPIPA1) from Homo sapiens (Human).